The sequence spans 214 residues: MSTLHKVKAYFGMAPMDDYEDEYYDDRAPSRGFPRPRFDDGYGRYDGDDYDDPRREPADYPPPAGYRGGYAEESRYGAVHPREFERPEMGRPRFGSWLRNSTRGALAMDPRRMAMMFEEGHPLSKITTLRPKDYSEARTIGERFRDGTPVIMDLVSMDNADAKRLVDFAAGLAFALRGSFDKVATKVFLLSPADVDVSPEERRRIAETGFYAYQ.

The tract at residues 23–70 (YYDDRAPSRGFPRPRFDDGYGRYDGDDYDDPRREPADYPPPAGYRGGY) is disordered. The segment covering 36–58 (PRFDDGYGRYDGDDYDDPRREPA) has biased composition (basic and acidic residues).

It belongs to the SepF family. As to quaternary structure, homodimer. Interacts with FtsZ.

It is found in the cytoplasm. In terms of biological role, cell division protein that is part of the divisome complex and is recruited early to the Z-ring. Probably stimulates Z-ring formation, perhaps through the cross-linking of FtsZ protofilaments. Its function overlaps with FtsA. This chain is Cell division protein SepF, found in Mycobacterium avium (strain 104).